We begin with the raw amino-acid sequence, 31 residues long: Cyclotide mra3 (31 aa).

Disulfide bonds link Cys5-Cys21, Cys9-Cys23, and Cys14-Cys28.

Post-translationally, this is a cyclic peptide. Contains 3 disulfide bonds.

In terms of biological role, probably participates in a plant defense mechanism. The polypeptide is Cyclotide mra3 (Melicytus ramiflorus (Whitey wood)).